The primary structure comprises 218 residues: Ras-related protein RABE1e (218 aa).

22–29 provides a ligand contact to GTP; sequence GDSGVGKS. The Effector region motif lies at 44 to 52; that stretch reads FITTIGIDF. GTP contacts are provided by residues 70–74, 128–131, and 159–160; these read DTAGQ, NKAD, and SA. Residues 182–218 are disordered; that stretch reads TESDTKAEPQGIKITKQDANKASSSSTNEKSACCSYV. Residues 201–211 are compositionally biased toward polar residues; it reads NKASSSSTNEK. S-geranylgeranyl cysteine attachment occurs at residues cysteine 214 and cysteine 215.

The protein belongs to the small GTPase superfamily. Rab family. As to quaternary structure, interacts with PI5K2.

The protein resides in the golgi apparatus membrane. The protein localises to the cell membrane. Involved in membrane trafficking from the Golgi to the plasma membrane. This Arabidopsis thaliana (Mouse-ear cress) protein is Ras-related protein RABE1e (RABE1E).